The following is a 640-amino-acid chain: SH3 domain-containing protein 21 (640 aa).

The tract at residues 1 to 60 (MVQSELQLQPRAGGRAEAASWGDRGNDKGGLGNPDMPSVSPGPQRPPKLSSLAYDSPPDY) is disordered. Residues 65–126 (SHPEVYRVLF…PDNFVLPPPP (62 aa)) enclose the SH3 domain. Disordered regions lie at residues 133–361 (RKVV…PLGD), 401–551 (YFVA…PDSQ), and 618–640 (VQVM…TQTY). Over residues 177 to 186 (PSRDSQKLTS) the composition is skewed to basic and acidic residues. Positions 210-220 (TQTPQQRSVSS) are enriched in polar residues. 3 stretches are compositionally biased toward basic and acidic residues: residues 401-416 (YFVA…EAHT), 459-469 (ALEKPHPHEEA), and 494-532 (RPLR…EVPP). A coiled-coil region spans residues 572-626 (VDVTSLRGEVESLRRALELMEVQLERKLTDIWEELKSEKEQRRRLEVQVMQGTQK). A compositionally biased stretch (polar residues) spans 621–640 (MQGTQKSQTPRVIHTQTQTY).

In Homo sapiens (Human), this protein is SH3 domain-containing protein 21 (SH3D21).